The sequence spans 492 residues: Adenosylhomocysteinase (492 aa).

Residues Thr-68, Asp-153, and Glu-215 each contribute to the substrate site. Thr-216–Thr-218 is an NAD(+) binding site. Substrate is bound by residues Lys-245 and Asp-249. Residues Asn-250, Gly-279–Gly-284, Glu-302, Asn-337, Ile-358–His-360, and Asn-406 each bind NAD(+).

This sequence belongs to the adenosylhomocysteinase family. It depends on NAD(+) as a cofactor.

It localises to the cytoplasm. The catalysed reaction is S-adenosyl-L-homocysteine + H2O = L-homocysteine + adenosine. The protein operates within amino-acid biosynthesis; L-homocysteine biosynthesis; L-homocysteine from S-adenosyl-L-homocysteine: step 1/1. In terms of biological role, may play a key role in the regulation of the intracellular concentration of adenosylhomocysteine. This Mycobacterium marinum (strain ATCC BAA-535 / M) protein is Adenosylhomocysteinase.